A 372-amino-acid polypeptide reads, in one-letter code: Germination protease (372 aa).

Positions 1-15 are excised as a propeptide; the sequence is MVKELNLEQYNVRTD.

It belongs to the peptidase A25 family. As to quaternary structure, homotetramer. Post-translationally, autoproteolytically processed. The inactive tetrameric zymogen termed p46 autoprocesses to a smaller form termed p41, which is active only during spore germination.

The enzyme catalyses Endopeptidase action with P4 Glu or Asp, P1 preferably Glu &gt; Asp, P1' hydrophobic and P2' Ala.. Its function is as follows. Initiates the rapid degradation of small, acid-soluble proteins during spore germination. The chain is Germination protease from Halalkalibacterium halodurans (strain ATCC BAA-125 / DSM 18197 / FERM 7344 / JCM 9153 / C-125) (Bacillus halodurans).